The chain runs to 348 residues: UDP-N-acetylglucosamine--N-acetylmuramyl-(pentapeptide) pyrophosphoryl-undecaprenol N-acetylglucosamine transferase (348 aa).

UDP-N-acetyl-alpha-D-glucosamine contacts are provided by residues 11–13 (TGG), Asn120, Arg161, Ser187, and Gln281.

The protein belongs to the glycosyltransferase 28 family. MurG subfamily.

It localises to the cell inner membrane. The enzyme catalyses di-trans,octa-cis-undecaprenyl diphospho-N-acetyl-alpha-D-muramoyl-L-alanyl-D-glutamyl-meso-2,6-diaminopimeloyl-D-alanyl-D-alanine + UDP-N-acetyl-alpha-D-glucosamine = di-trans,octa-cis-undecaprenyl diphospho-[N-acetyl-alpha-D-glucosaminyl-(1-&gt;4)]-N-acetyl-alpha-D-muramoyl-L-alanyl-D-glutamyl-meso-2,6-diaminopimeloyl-D-alanyl-D-alanine + UDP + H(+). It functions in the pathway cell wall biogenesis; peptidoglycan biosynthesis. Its function is as follows. Cell wall formation. Catalyzes the transfer of a GlcNAc subunit on undecaprenyl-pyrophosphoryl-MurNAc-pentapeptide (lipid intermediate I) to form undecaprenyl-pyrophosphoryl-MurNAc-(pentapeptide)GlcNAc (lipid intermediate II). In Crocosphaera subtropica (strain ATCC 51142 / BH68) (Cyanothece sp. (strain ATCC 51142)), this protein is UDP-N-acetylglucosamine--N-acetylmuramyl-(pentapeptide) pyrophosphoryl-undecaprenol N-acetylglucosamine transferase.